A 193-amino-acid polypeptide reads, in one-letter code: NADPH:quinone oxidoreductase MdaB (193 aa).

Residues 16 to 23, 69 to 72, Tyr-108, and 124 to 127 each bind FAD; these read SNGQLNDT, GWWM, and TWNA.

The protein belongs to the oxidoreductase MdaB family. Homodimer. It depends on FAD as a cofactor.

Its subcellular location is the cytoplasm. The enzyme catalyses a quinone + NADPH + H(+) = a quinol + NADP(+). Its function is as follows. NADPH-specific quinone reductase. The protein is NADPH:quinone oxidoreductase MdaB of Escherichia coli O157:H7.